The sequence spans 465 residues: FeMo cofactor biosynthesis protein FixZ (465 aa).

The tract at residues 1–36 (MSEPEIKVGKTSSALFDRAPMAPSMPGGRASSSHGL) is disordered. In terms of domain architecture, Radical SAM core spans 61–312 (HHYFARMHXX…MRHCQQCRAD (252 aa)). [4Fe-4S] cluster is bound by residues C75 and C79. Y81 serves as a coordination point for S-adenosyl-L-methionine. C82 provides a ligand contact to [4Fe-4S] cluster. S-adenosyl-L-methionine-binding residues include G129, T181, and I233. The [4Fe-4S] cluster site is built by C306 and C309.

It belongs to the radical SAM superfamily. NifB family. Requires [4Fe-4S] cluster as cofactor.

It participates in cofactor biosynthesis; Fe-Mo cofactor biosynthesis. Involved in the biosynthesis of the iron-molybdenum cofactor (FeMo-co or M-cluster) found in the dinitrogenase enzyme of the nitrogenase complex in nitrogen-fixing microorganisms. Catalyzes the crucial step of radical SAM-dependent carbide insertion that occurs concomitant with the insertion of a 9th sulfur and the rearrangement/coupling of two [4Fe-4S] clusters into a [8Fe-9S-C] cluster, the precursor to the M-cluster. The chain is FeMo cofactor biosynthesis protein FixZ (fixZ) from Rhizobium leguminosarum.